We begin with the raw amino-acid sequence, 87 residues long: Small ribosomal subunit protein bS20 (87 aa).

The interval 1-29 is disordered; sequence MANTAQARKRARQAVKQNAHNSSQRSTLR. Polar residues predominate over residues 20–29; the sequence is HNSSQRSTLR.

The protein belongs to the bacterial ribosomal protein bS20 family.

Functionally, binds directly to 16S ribosomal RNA. This chain is Small ribosomal subunit protein bS20, found in Janthinobacterium sp. (strain Marseille) (Minibacterium massiliensis).